We begin with the raw amino-acid sequence, 416 residues long: Enolase (416 aa).

Gln162 lines the (2R)-2-phosphoglycerate pocket. Glu204 acts as the Proton donor in catalysis. Positions 241, 282, and 309 each coordinate Mg(2+). (2R)-2-phosphoglycerate contacts are provided by Lys334, Arg363, Ser364, and Lys385. Lys334 acts as the Proton acceptor in catalysis.

Belongs to the enolase family. It depends on Mg(2+) as a cofactor.

The protein resides in the cytoplasm. Its subcellular location is the secreted. The protein localises to the cell surface. The catalysed reaction is (2R)-2-phosphoglycerate = phosphoenolpyruvate + H2O. It participates in carbohydrate degradation; glycolysis; pyruvate from D-glyceraldehyde 3-phosphate: step 4/5. Its function is as follows. Catalyzes the reversible conversion of 2-phosphoglycerate (2-PG) into phosphoenolpyruvate (PEP). It is essential for the degradation of carbohydrates via glycolysis. The protein is Enolase of Campylobacter concisus (strain 13826).